Reading from the N-terminus, the 418-residue chain is Gamma-glutamyl phosphate reductase (418 aa).

The protein belongs to the gamma-glutamyl phosphate reductase family.

It is found in the cytoplasm. It catalyses the reaction L-glutamate 5-semialdehyde + phosphate + NADP(+) = L-glutamyl 5-phosphate + NADPH + H(+). It functions in the pathway amino-acid biosynthesis; L-proline biosynthesis; L-glutamate 5-semialdehyde from L-glutamate: step 2/2. Its function is as follows. Catalyzes the NADPH-dependent reduction of L-glutamate 5-phosphate into L-glutamate 5-semialdehyde and phosphate. The product spontaneously undergoes cyclization to form 1-pyrroline-5-carboxylate. The protein is Gamma-glutamyl phosphate reductase of Syntrophotalea carbinolica (strain DSM 2380 / NBRC 103641 / GraBd1) (Pelobacter carbinolicus).